The chain runs to 421 residues: Tyrosine--tRNA ligase (421 aa).

Residue Y38 participates in L-tyrosine binding. A 'HIGH' region motif is present at residues 43–52 (PTGDSLHIGH). Residues Y169 and Q173 each contribute to the L-tyrosine site. The 'KMSKS' region signature appears at 231 to 235 (KFGKS). Position 234 (K234) interacts with ATP. Residues 353–419 (KNLVDFLVDT…GKKKYTLVHI (67 aa)) enclose the S4 RNA-binding domain.

This sequence belongs to the class-I aminoacyl-tRNA synthetase family. TyrS type 1 subfamily. As to quaternary structure, homodimer.

It is found in the cytoplasm. It catalyses the reaction tRNA(Tyr) + L-tyrosine + ATP = L-tyrosyl-tRNA(Tyr) + AMP + diphosphate + H(+). In terms of biological role, catalyzes the attachment of tyrosine to tRNA(Tyr) in a two-step reaction: tyrosine is first activated by ATP to form Tyr-AMP and then transferred to the acceptor end of tRNA(Tyr). The sequence is that of Tyrosine--tRNA ligase from Lactobacillus delbrueckii subsp. bulgaricus (strain ATCC BAA-365 / Lb-18).